Reading from the N-terminus, the 524-residue chain is GMP synthase [glutamine-hydrolyzing] (524 aa).

The Glutamine amidotransferase type-1 domain maps to 9–207 (RILILDFGSQ…VIHICQCIPN (199 aa)). Cysteine 86 serves as the catalytic Nucleophile. Catalysis depends on residues histidine 181 and glutamate 183. The 192-residue stretch at 208–399 (WTTKHIIEDS…LGLPADLIYR (192 aa)) folds into the GMPS ATP-PPase domain. 235–241 (SGGVDSA) contacts ATP.

Homodimer.

The catalysed reaction is XMP + L-glutamine + ATP + H2O = GMP + L-glutamate + AMP + diphosphate + 2 H(+). Its pathway is purine metabolism; GMP biosynthesis; GMP from XMP (L-Gln route): step 1/1. Catalyzes the synthesis of GMP from XMP. This Coxiella burnetii (strain RSA 331 / Henzerling II) protein is GMP synthase [glutamine-hydrolyzing].